Consider the following 481-residue polypeptide: Pentatricopeptide repeat-containing protein At2g48000 (481 aa).

9 PPR repeats span residues 147–181 (TTSV…QDGP), 187–221 (SVST…NILP), 222–256 (DSST…LVKP), 257–287 (TLAT…VKRH), 292–324 (EIKL…LIPK), 328–362 (KPWL…GLQI), 364–398 (TDGI…GWKM), 399–433 (SRSM…KISR), and 434–469 (SKKT…GHDF).

Belongs to the PPR family. P subfamily.

The polypeptide is Pentatricopeptide repeat-containing protein At2g48000 (Arabidopsis thaliana (Mouse-ear cress)).